The chain runs to 351 residues: Outer membrane protein A (351 aa).

An N-terminal signal peptide occupies residues 1–21; the sequence is MKKTAIAITVALAGFATVAQA. Beta stranded transmembrane passes span 27 to 37, 55 to 66, 70 to 78, 96 to 107, 112 to 120, 147 to 156, 161 to 168, and 187 to 195; these read TWYTGAKLGWS, QLGAGAFGGYQV, VGFEMGYDW, QGVQLTAKLGYP, LDVYTRLGG, PVFAGGVEWA, IATRLEYQ, and LLSLGVSYR. A run of 4 repeats spans residues 206–207, 208–209, 210–211, and 212–213. Residues 206 to 213 are 4 X 2 AA tandem repeats of A-P; it reads APAPAPAP. Residues 215–343 form the OmpA-like domain; sequence VQTKHFTLKS…RVEIEVKGIK (129 aa). Cysteines 316 and 328 form a disulfide.

This sequence belongs to the outer membrane OOP (TC 1.B.6) superfamily. OmpA family. As to quaternary structure, monomer and homodimer.

The protein resides in the cell outer membrane. With TolR probably plays a role in maintaining the position of the peptidoglycan cell wall in the periplasm. Acts as a porin with low permeability that allows slow penetration of small solutes; an internal gate slows down solute passage. Its function is as follows. Required for conjugation with F-type plasmids; probably serves as the mating receptor on recipient cells. The protein is Outer membrane protein A of Shigella dysenteriae.